The primary structure comprises 171 residues: Sorcin (171 aa).

EF-hand domains are found at residues 3–38 (MDTN…GLGT), 40–69 (LNIR…LGLF), 70–105 (KYVQ…FGYH), and 106–140 (LSPQ…LQTL). Ca(2+) is bound by residues Asp-16, Asp-18, Ser-20, Ser-22, Glu-27, Asp-53, Asp-55, Asn-57, Thr-59, Glu-64, Asp-83, Asp-85, Ser-87, Ser-89, and Glu-94.

It localises to the cytoplasm. Calcium-binding protein. This chain is Sorcin, found in Schistosoma japonicum (Blood fluke).